Consider the following 94-residue polypeptide: Large ribosomal subunit protein uL23cz (94 aa).

This sequence belongs to the universal ribosomal protein uL23 family. Part of the 50S ribosomal subunit.

The protein resides in the plastid. The protein localises to the chloroplast. Functionally, binds to 23S rRNA. This Agrostis stolonifera (Creeping bentgrass) protein is Large ribosomal subunit protein uL23cz (rpl23-A).